The sequence spans 95 residues: Ribonuclease kappa (95 aa).

2 helical membrane-spanning segments follow: residues 12–32 (GLII…FFYI) and 68–88 (CWIA…QFYM).

This sequence belongs to the RNase K family.

The protein localises to the membrane. Its function is as follows. Endoribonuclease. In terms of biological role, (Microbial infection) Required for the initial stages of clathrin-mediated endocytic uptake of a diverse set of flaviviruses, including dengue and West Nile. Not required for clathrin-mediated endocytosis and macropinocytosis. This is Ribonuclease kappa from Drosophila melanogaster (Fruit fly).